The chain runs to 600 residues: Copine-A (600 aa).

C2 domains are found at residues 1-111 (MNLK…TVCL) and 116-246 (KSGK…NVIN). Residues D23, D29, D82, D84, D89, D151, D158, D215, D217, and D223 each coordinate Ca(2+). The VWFA domain maps to 286–503 (NLIVGIDCTA…ELAAEVLREI (218 aa)). Positions 535–549 (YDNPTTTTTATSPST) are enriched in low complexity. A disordered region spans residues 535–583 (YDNPTTTTTATSPSTGIDLNKGSNVGLNLTKTESSPSPSGGAGIDLNKG). Residues 555-572 (KGSNVGLNLTKTESSPSP) are compositionally biased toward polar residues.

It belongs to the copine family. Requires Ca(2+) as cofactor.

It is found in the cytoplasm. It localises to the membrane. In terms of biological role, required for cytokinesis, contractile vacuole function and development. The sequence is that of Copine-A (cpnA) from Dictyostelium discoideum (Social amoeba).